A 130-amino-acid chain; its full sequence is DUF35 domain-containing scaffold protein (130 aa).

Zn(2+)-binding residues include cysteine 20, cysteine 23, cysteine 34, and cysteine 37.

The protein belongs to the scaffold protein DUF35 family. As to quaternary structure, interacts with acetoacetyl-CoA thiolase and HMG-CoA synthase (HMGCS) that catalyzes the first and second step in the mevalonate pathway, respectively.

Functionally, functions as a scaffold to connect the acetoacetyl-CoA thiolase and HMG-CoA synthase (HMGCS) dimers in the channeling thiolase/HMGCS complex, which allows for efficient coupling of the endergonic thiolase reaction with the exergonic HMGCS reaction. In Methanothermococcus thermolithotrophicus (Methanococcus thermolithotrophicus), this protein is DUF35 domain-containing scaffold protein.